Reading from the N-terminus, the 392-residue chain is DNA-directed RNA polymerase subunit Rpo1C (392 aa).

The protein belongs to the RNA polymerase beta' chain family. As to quaternary structure, part of the RNA polymerase complex.

The protein resides in the cytoplasm. The catalysed reaction is RNA(n) + a ribonucleoside 5'-triphosphate = RNA(n+1) + diphosphate. Its function is as follows. DNA-dependent RNA polymerase (RNAP) catalyzes the transcription of DNA into RNA using the four ribonucleoside triphosphates as substrates. Forms part of the jaw domain. This is DNA-directed RNA polymerase subunit Rpo1C from Metallosphaera sedula (strain ATCC 51363 / DSM 5348 / JCM 9185 / NBRC 15509 / TH2).